We begin with the raw amino-acid sequence, 206 residues long: Ribosomal RNA large subunit methyltransferase E (206 aa).

S-adenosyl-L-methionine contacts are provided by Gly60, Trp62, Asp80, Asp96, and Asp121. Lys161 serves as the catalytic Proton acceptor.

It belongs to the class I-like SAM-binding methyltransferase superfamily. RNA methyltransferase RlmE family.

The protein resides in the cytoplasm. It carries out the reaction uridine(2552) in 23S rRNA + S-adenosyl-L-methionine = 2'-O-methyluridine(2552) in 23S rRNA + S-adenosyl-L-homocysteine + H(+). In terms of biological role, specifically methylates the uridine in position 2552 of 23S rRNA at the 2'-O position of the ribose in the fully assembled 50S ribosomal subunit. The protein is Ribosomal RNA large subunit methyltransferase E of Nitrosomonas eutropha (strain DSM 101675 / C91 / Nm57).